Reading from the N-terminus, the 208-residue chain is Probable GTP-binding protein EngB (208 aa).

Residues 18–187 enclose the EngB-type G domain; the sequence is KQFEICVIGR…FALMKKVVIQ (170 aa). GTP-binding positions include 26–33, 52–56, 69–72, 135–138, and 166–168; these read GRSNVGKS, GRTQL, DLPG, NKLD, and VSA. Residues serine 33 and threonine 54 each contribute to the Mg(2+) site.

It belongs to the TRAFAC class TrmE-Era-EngA-EngB-Septin-like GTPase superfamily. EngB GTPase family. Mg(2+) is required as a cofactor.

Necessary for normal cell division and for the maintenance of normal septation. This is Probable GTP-binding protein EngB from Ureaplasma parvum serovar 3 (strain ATCC 27815 / 27 / NCTC 11736).